The sequence spans 889 residues: Alanine--tRNA ligase (889 aa).

Residues H574, H578, C682, and H686 each contribute to the Zn(2+) site.

Belongs to the class-II aminoacyl-tRNA synthetase family. The cofactor is Zn(2+).

Its subcellular location is the cytoplasm. It catalyses the reaction tRNA(Ala) + L-alanine + ATP = L-alanyl-tRNA(Ala) + AMP + diphosphate. Catalyzes the attachment of alanine to tRNA(Ala) in a two-step reaction: alanine is first activated by ATP to form Ala-AMP and then transferred to the acceptor end of tRNA(Ala). Also edits incorrectly charged Ser-tRNA(Ala) and Gly-tRNA(Ala) via its editing domain. The chain is Alanine--tRNA ligase from Orientia tsutsugamushi (strain Ikeda) (Rickettsia tsutsugamushi).